A 678-amino-acid chain; its full sequence is DNA ligase (678 aa).

Residues 36 to 40, 85 to 86, and glutamate 117 each bind NAD(+); these read DSEFD and SL. Lysine 119 serves as the catalytic N6-AMP-lysine intermediate. NAD(+)-binding residues include arginine 140, glutamate 177, lysine 294, and lysine 318. Residues cysteine 412, cysteine 415, cysteine 430, and cysteine 436 each coordinate Zn(2+). The BRCT domain occupies 595-678; that stretch reads IIDAPLLGKT…TWWQHYGNAV (84 aa).

It belongs to the NAD-dependent DNA ligase family. LigA subfamily. The cofactor is Mg(2+). Requires Mn(2+) as cofactor.

It carries out the reaction NAD(+) + (deoxyribonucleotide)n-3'-hydroxyl + 5'-phospho-(deoxyribonucleotide)m = (deoxyribonucleotide)n+m + AMP + beta-nicotinamide D-nucleotide.. In terms of biological role, DNA ligase that catalyzes the formation of phosphodiester linkages between 5'-phosphoryl and 3'-hydroxyl groups in double-stranded DNA using NAD as a coenzyme and as the energy source for the reaction. It is essential for DNA replication and repair of damaged DNA. The chain is DNA ligase from Dichelobacter nodosus (strain VCS1703A).